Consider the following 445-residue polypeptide: Maltoporin (445 aa).

Residues 1-25 (MKMKAKWLPIAAGVTAALASQAAFA) form the signal peptide.

The protein belongs to the porin LamB (TC 1.B.3) family. As to quaternary structure, homotrimer formed of three 18-stranded antiparallel beta-barrels, containing three independent channels.

The protein localises to the cell outer membrane. The catalysed reaction is beta-maltose(in) = beta-maltose(out). Functionally, involved in the transport of maltose and maltodextrins. This is Maltoporin from Aeromonas salmonicida.